A 303-amino-acid chain; its full sequence is RELT-like protein 2 (303 aa).

The chain crosses the membrane as a helical span at residues 15–35 (LYMLFLLVLVFFLMGLVGFMI). 2 disordered regions span residues 46-67 (CRTS…DDDM) and 111-303 (SSLQ…AGGV). Ser52 bears the Phosphoserine mark. Basic and acidic residues-rich tracts occupy residues 148 to 158 (RSKEGKSRPRP) and 172 to 188 (THIE…DGSP). Residues 194–212 (GSGGGQDPGGGQGPGGGQP) show a composition bias toward gly residues.

It belongs to the RELT family. In terms of assembly, interacts with RELT, RELL1, OXSR1, PLSCR1 and TRAF2.

It is found in the cell membrane. Induces activation of MAPK14/p38 cascade, when overexpressed. Induces apoptosis, when overexpressed. The sequence is that of RELT-like protein 2 (RELL2) from Bos taurus (Bovine).